Here is a 57-residue protein sequence, read N- to C-terminus: Cytochrome b-c1 complex subunit 10, mitochondrial (57 aa).

Residues 1–23 (MAGTSGLLNAVKPKIQTIDIQAA) are Mitochondrial matrix-facing. The chain crosses the membrane as a helical span at residues 24-44 (AGWGIAAAAGAIWVVQPFGWI). Residues 45–57 (KKTFIDPPPTEEK) lie on the Mitochondrial intermembrane side of the membrane.

Belongs to the UQCR11/QCR10 family. Component of the ubiquinol-cytochrome c oxidoreductase (cytochrome b-c1 complex, complex III, CIII), a multisubunit enzyme composed of 10 subunits. The complex is composed of 3 respiratory subunits cytochrome b (MT-CYB), cytochrome c1 (CYC1-1 or CYC1-2) and Rieske protein (UCR1-1 or UCR1-2), 2 core protein subunits MPPalpha1 (or MPPalpha2) and MPPB, and 5 low-molecular weight protein subunits QCR7-1 (or QCR7-2), UCRQ-1 (or UCRQ-2), QCR9, UCRY and probably QCR6-1 (or QCR6-2). The complex exists as an obligatory dimer and forms supercomplexes (SCs) in the inner mitochondrial membrane with NADH-ubiquinone oxidoreductase (complex I, CI), resulting in different assemblies (supercomplexes SCI(1)III(2) and SCI(2)III(4)).

Its subcellular location is the mitochondrion inner membrane. Its function is as follows. Component of the ubiquinol-cytochrome c oxidoreductase, a multisubunit transmembrane complex that is part of the mitochondrial electron transport chain which drives oxidative phosphorylation. The respiratory chain contains 3 multisubunit complexes succinate dehydrogenase (complex II, CII), ubiquinol-cytochrome c oxidoreductase (cytochrome b-c1 complex, complex III, CIII) and cytochrome c oxidase (complex IV, CIV), that cooperate to transfer electrons derived from NADH and succinate to molecular oxygen, creating an electrochemical gradient over the inner membrane that drives transmembrane transport and the ATP synthase. The cytochrome b-c1 complex catalyzes electron transfer from ubiquinol to cytochrome c, linking this redox reaction to translocation of protons across the mitochondrial inner membrane, with protons being carried across the membrane as hydrogens on the quinol. In the process called Q cycle, 2 protons are consumed from the matrix, 4 protons are released into the intermembrane space and 2 electrons are passed to cytochrome c. In Arabidopsis thaliana (Mouse-ear cress), this protein is Cytochrome b-c1 complex subunit 10, mitochondrial (UCRY).